The following is a 351-amino-acid chain: Protein Wnt-4 (351 aa).

The first 22 residues, 1–22 (MTPEYFLRSLLMMILAVFSANA), serve as a signal peptide directing secretion. 11 disulfides stabilise this stretch: Cys78–Cys89, Cys128–Cys136, Cys138–Cys155, Cys206–Cys220, Cys208–Cys215, Cys280–Cys311, Cys296–Cys306, Cys310–Cys350, Cys326–Cys341, Cys328–Cys338, and Cys333–Cys334. N-linked (GlcNAc...) asparagine glycosylation occurs at Asn88. Residue Ser212 is the site of O-palmitoleoyl serine; by PORCN attachment. The N-linked (GlcNAc...) asparagine glycan is linked to Asn297.

Belongs to the Wnt family. Post-translationally, palmitoleoylation is required for efficient binding to frizzled receptors. Depalmitoleoylation leads to Wnt signaling pathway inhibition. As to expression, expressed in the brain and floor plate. In the developing pronephros, expressed in the proximal tubules and nephrostomes but absent from the pronephric duct.

It localises to the secreted. The protein resides in the extracellular space. The protein localises to the extracellular matrix. Ligand for members of the frizzled family of seven transmembrane receptors. Plays an important role in embryonic kidney development. Acts downstream of Notch signaling during pronephric kidney development. During early pronephros development, patterns the proximal pronephric anlagen to promote glomus and nephrostome formation. Also required later in pronephros development for tubulogenesis. The protein is Protein Wnt-4 (wnt4) of Xenopus laevis (African clawed frog).